The chain runs to 102 residues: Urease subunit beta (102 aa).

The protein belongs to the urease beta subunit family. Heterotrimer of UreA (gamma), UreB (beta) and UreC (alpha) subunits. Three heterotrimers associate to form the active enzyme.

It is found in the cytoplasm. It carries out the reaction urea + 2 H2O + H(+) = hydrogencarbonate + 2 NH4(+). Its pathway is nitrogen metabolism; urea degradation; CO(2) and NH(3) from urea (urease route): step 1/1. In Blochmanniella pennsylvanica (strain BPEN), this protein is Urease subunit beta.